The chain runs to 151 residues: MAENNPLKIHNLRPAPGAKTAKTRVGRGEASKGKTAGRGTKGTKARYQVPERFEGGQMPLHMRLPKLKGFKNPFKTEFQVVNLDKLAALYPEGGEVTVEGLVAKGAVRKNSLVKVLGQGEISVALQVTVDAVSGSAKEKITAAGGTVTELV.

The segment at M1 to L60 is disordered.

The protein belongs to the universal ribosomal protein uL15 family. As to quaternary structure, part of the 50S ribosomal subunit.

Functionally, binds to the 23S rRNA. The chain is Large ribosomal subunit protein uL15 from Streptomyces coelicolor (strain ATCC BAA-471 / A3(2) / M145).